A 199-amino-acid polypeptide reads, in one-letter code: Ribosome maturation factor RimM (199 aa).

In terms of domain architecture, PRC barrel spans 95–168; the sequence is EDEFYHADLV…FVRVDPVAAG (74 aa). A disordered region spans residues 167–199; sequence AGLVEDEDGDAPREEDFDPKGRPRGPRDAGGNR. The span at 176 to 193 shows a compositional bias: basic and acidic residues; it reads DAPREEDFDPKGRPRGPR.

It belongs to the RimM family. In terms of assembly, binds ribosomal protein uS19.

The protein localises to the cytoplasm. Its function is as follows. An accessory protein needed during the final step in the assembly of 30S ribosomal subunit, possibly for assembly of the head region. Essential for efficient processing of 16S rRNA. May be needed both before and after RbfA during the maturation of 16S rRNA. It has affinity for free ribosomal 30S subunits but not for 70S ribosomes. This Mesorhizobium japonicum (strain LMG 29417 / CECT 9101 / MAFF 303099) (Mesorhizobium loti (strain MAFF 303099)) protein is Ribosome maturation factor RimM.